The chain runs to 156 residues: uncharacterized protein (156 aa).

Residues 1–22 form the signal peptide; it reads MFGKVSSLLVFASFLIIQGAFA. A lipid anchor (GPI-anchor amidated serine) is attached at Ser-129. A propeptide spans 130–156 (removed in mature form); sequence GSPVRFSKSSLLIVSLLSIAAFAALVL.

It localises to the cell membrane. This is an uncharacterized protein from Schizosaccharomyces pombe (strain 972 / ATCC 24843) (Fission yeast).